Reading from the N-terminus, the 1012-residue chain is Roundabout homolog 4 (1012 aa).

The first 27 residues, 1–27 (MGSGGTGLLGTEWPLPLLLLFIMGGEA), serve as a signal peptide directing secretion. 2 consecutive Ig-like C2-type domains span residues 32-132 (PQIL…ARLS) and 138-225 (EDFQ…ARVS). Cystine bridges form between C53/C115 and C159/C208. N-linked (GlcNAc...) asparagine glycosylation is found at N201 and N247. 2 Fibronectin type-III domains span residues 249-346 (TLLN…LPEQ) and 348-443 (PSAP…LEQA). Residues N361, N390, and N397 are each glycosylated (N-linked (GlcNAc...) asparagine). Disordered regions lie at residues 533–553 (TSGSRDLSSSSSLSSRLGLDP) and 586–616 (LIAEQPSSPPVRPSPKTPAARRFPSKLAGTS). A compositionally biased stretch (low complexity) spans 534 to 550 (SGSRDLSSSSSLSSRLG). Residues 592-601 (SSPPVRPSPK) are compositionally biased toward pro residues. 2 N-linked (GlcNAc...) asparagine glycosylation sites follow: N681 and N713. A disordered region spans residues 711-801 (HRNSSELASR…LEEEEDQDSV (91 aa)). A compositionally biased stretch (low complexity) spans 745 to 759 (LQAPSSDPLPAAPLS). Polar residues predominate over residues 760 to 771 (VLNSSRPSSPQA). N762 and N783 each carry an N-linked (GlcNAc...) asparagine glycan. Positions 772 to 791 (SFLSCPSPSSSNLSSSSLSS) are enriched in low complexity. A phosphoserine mark is found at S814 and S947. The segment at 980 to 1012 (RLGRGLPPWPPDSRASSQRSWLTGAVPKAGDSS) is disordered.

It belongs to the immunoglobulin superfamily. ROBO family. In terms of assembly, interacts with SLIT2 and ENAH. Expressed specifically in embryo and adult vascular endothelium.

Its function is as follows. Receptor for Slit proteins, at least for SLIT2, and seems to be involved in angiogenesis and vascular patterning. May mediate the inhibition of primary endothelial cell migration by Slit proteins. Involved in the maintenance of endothelial barrier organization and function. This chain is Roundabout homolog 4 (Robo4), found in Mus musculus (Mouse).